Reading from the N-terminus, the 510-residue chain is ATP synthase subunit alpha (510 aa).

169–176 is an ATP binding site; sequence GDRQTGKT.

This sequence belongs to the ATPase alpha/beta chains family. As to quaternary structure, F-type ATPases have 2 components, CF(1) - the catalytic core - and CF(0) - the membrane proton channel. CF(1) has five subunits: alpha(3), beta(3), gamma(1), delta(1), epsilon(1). CF(0) has three main subunits: a(1), b(2) and c(9-12). The alpha and beta chains form an alternating ring which encloses part of the gamma chain. CF(1) is attached to CF(0) by a central stalk formed by the gamma and epsilon chains, while a peripheral stalk is formed by the delta and b chains.

It localises to the cell inner membrane. It catalyses the reaction ATP + H2O + 4 H(+)(in) = ADP + phosphate + 5 H(+)(out). In terms of biological role, produces ATP from ADP in the presence of a proton gradient across the membrane. The alpha chain is a regulatory subunit. The chain is ATP synthase subunit alpha from Nitrobacter winogradskyi (strain ATCC 25391 / DSM 10237 / CIP 104748 / NCIMB 11846 / Nb-255).